We begin with the raw amino-acid sequence, 387 residues long: Phosphoglycerate kinase (387 aa).

Residues 21 to 23, R36, 59 to 62, R113, and R146 each bind substrate; these read DLN and HLGR. ATP contacts are provided by residues K197, E314, and 340-343; that span reads GGDT.

It belongs to the phosphoglycerate kinase family. In terms of assembly, monomer.

It is found in the cytoplasm. The catalysed reaction is (2R)-3-phosphoglycerate + ATP = (2R)-3-phospho-glyceroyl phosphate + ADP. The protein operates within carbohydrate degradation; glycolysis; pyruvate from D-glyceraldehyde 3-phosphate: step 2/5. The polypeptide is Phosphoglycerate kinase (Pseudomonas syringae pv. syringae (strain B728a)).